We begin with the raw amino-acid sequence, 573 residues long: Probable D-xylulose kinase A (573 aa).

Substrate contacts are provided by H97, R168, D284, and N285. ATP contacts are provided by residues W366, 471 to 472 (GG), and N475.

This sequence belongs to the FGGY kinase family.

The protein resides in the cytoplasm. It catalyses the reaction D-xylulose + ATP = D-xylulose 5-phosphate + ADP + H(+). Highly specific D-xylulose kinase which participates in the catabolism of xylose. Xylose is a major component of hemicelluloses such as xylan. Most fungi utilize D-xylose via three enzymatic reactions, xylose reductase (XR), xylitol dehydrogenase (XDH), and xylulokinase, to form xylulose 5-phosphate, which enters pentose phosphate pathway. The chain is Probable D-xylulose kinase A (xkiA) from Neosartorya fischeri (strain ATCC 1020 / DSM 3700 / CBS 544.65 / FGSC A1164 / JCM 1740 / NRRL 181 / WB 181) (Aspergillus fischerianus).